A 192-amino-acid polypeptide reads, in one-letter code: Ion-translocating oxidoreductase complex subunit B (192 aa).

The interval 1-26 (MNAIWIAVAAVSLLGLAFGAILGYAS) is hydrophobic. The 4Fe-4S domain maps to 32-91 (EDDPVVEKIDEILPQSQCGQCGYPGCRPYAEAISCNGEKINRCAPGGEAVMLKIAELLNV). [4Fe-4S] cluster contacts are provided by Cys49, Cys52, Cys57, Cys74, Cys117, Cys120, Cys123, Cys127, Cys147, Cys150, Cys153, and Cys157. 4Fe-4S ferredoxin-type domains follow at residues 108 to 137 (MVAV…GATR) and 138 to 167 (AMHT…LQPV).

This sequence belongs to the 4Fe4S bacterial-type ferredoxin family. RnfB subfamily. The complex is composed of six subunits: RsxA, RsxB, RsxC, RsxD, RsxE and RsxG. [4Fe-4S] cluster serves as cofactor.

Its subcellular location is the cell inner membrane. Part of a membrane-bound complex that couples electron transfer with translocation of ions across the membrane. Required to maintain the reduced state of SoxR. The protein is Ion-translocating oxidoreductase complex subunit B of Escherichia coli O8 (strain IAI1).